The primary structure comprises 135 residues: Large ribosomal subunit protein bL12c (135 aa).

Belongs to the bacterial ribosomal protein bL12 family. As to quaternary structure, homodimer. Part of the ribosomal stalk of the 50S ribosomal subunit. Forms a multimeric L10(L12)X complex, where L10 forms an elongated spine to which 2 to 4 L12 dimers bind in a sequential fashion. Binds GTP-bound translation factors.

It is found in the plastid. It localises to the chloroplast. Forms part of the ribosomal stalk which helps the ribosome interact with GTP-bound translation factors. Is thus essential for accurate translation. The sequence is that of Large ribosomal subunit protein bL12c from Chara vulgaris (Common stonewort).